A 399-amino-acid chain; its full sequence is Enolase (399 aa).

(2R)-2-phosphoglycerate is bound at residue Gln149. Catalysis depends on Glu191, which acts as the Proton donor. Mg(2+) contacts are provided by Asp227, Glu268, and Asp293. 4 residues coordinate (2R)-2-phosphoglycerate: Lys318, Arg347, Ser348, and Lys369. Lys318 serves as the catalytic Proton acceptor.

This sequence belongs to the enolase family. Mg(2+) is required as a cofactor.

Its subcellular location is the cytoplasm. It is found in the secreted. The protein resides in the cell surface. The enzyme catalyses (2R)-2-phosphoglycerate = phosphoenolpyruvate + H2O. The protein operates within carbohydrate degradation; glycolysis; pyruvate from D-glyceraldehyde 3-phosphate: step 4/5. Its function is as follows. Catalyzes the reversible conversion of 2-phosphoglycerate (2-PG) into phosphoenolpyruvate (PEP). It is essential for the degradation of carbohydrates via glycolysis. In Archaeoglobus fulgidus (strain ATCC 49558 / DSM 4304 / JCM 9628 / NBRC 100126 / VC-16), this protein is Enolase.